Here is a 365-residue protein sequence, read N- to C-terminus: LIM and cysteine-rich domains protein 1 (365 aa).

Phosphoserine is present on serine 16. A PET domain is found at 99-206; sequence MIMTNPIATG…GEVALPGQGG (108 aa). Positions 200-235 are disordered; sequence ALPGQGGLPKEEGKQQEKPEGAETTAATTNGSLSDP. Residues 208 to 220 show a composition bias toward basic and acidic residues; the sequence is PKEEGKQQEKPEG. 2 LIM zinc-binding domains span residues 241–306 and 307–365; these read YVCE…SLRP and RCSG…SKRS.

In terms of assembly, interacts with GATA1 and GATA4. Interacts with beta-dystroglycan. Interacts with GATA6. In terms of tissue distribution, expressed in the heart (at protein level). Expressed in many tissues with highest abundance in skeletal muscle.

It is found in the cytoplasm. Its subcellular location is the nucleus. Functionally, transcriptional cofactor that restricts GATA6 function by inhibiting DNA-binding, resulting in repression of GATA6 transcriptional activation of downstream target genes. Represses GATA6-mediated trans activation of lung- and cardiac tissue-specific promoters. Inhibits DNA-binding by GATA4 and GATA1 to the cTNC promoter. Plays a critical role in the development of cardiac hypertrophy via activation of calcineurin/nuclear factor of activated T-cells signaling pathway. This chain is LIM and cysteine-rich domains protein 1 (LMCD1), found in Homo sapiens (Human).